The primary structure comprises 91 residues: uncharacterized protein (91 aa).

A signal peptide spans 1 to 25 (MLLQRIGIEHLRIWILLLLISLVPA).

This is an uncharacterized protein from Caenorhabditis elegans.